We begin with the raw amino-acid sequence, 408 residues long: Argininosuccinate synthase (408 aa).

Ala14–Ser22 serves as a coordination point for ATP. L-citrulline-binding residues include Tyr92 and Ser97. Position 122 (Gly122) interacts with ATP. The L-aspartate site is built by Thr124, Asn128, and Asp129. Asn128 serves as a coordination point for L-citrulline. L-citrulline is bound by residues Arg132, Ser181, Ser190, Glu266, and Tyr278.

It belongs to the argininosuccinate synthase family. Type 1 subfamily. As to quaternary structure, homotetramer.

The protein resides in the cytoplasm. The catalysed reaction is L-citrulline + L-aspartate + ATP = 2-(N(omega)-L-arginino)succinate + AMP + diphosphate + H(+). It functions in the pathway amino-acid biosynthesis; L-arginine biosynthesis; L-arginine from L-ornithine and carbamoyl phosphate: step 2/3. In Moorella thermoacetica (strain ATCC 39073 / JCM 9320), this protein is Argininosuccinate synthase.